Reading from the N-terminus, the 155-residue chain is Cytochrome c-type biogenesis protein CcmE (155 aa).

Residues 1–8 (MNPVRKKR) are Cytoplasmic-facing. The helical; Signal-anchor for type II membrane protein transmembrane segment at 9–29 (LFIVLAILAGVGIAVALALSA) threads the bilayer. Residues 30–155 (LQQNINLFYT…YEGGKQEYAK (126 aa)) lie on the Periplasmic side of the membrane. Histidine 124 and tyrosine 128 together coordinate heme.

This sequence belongs to the CcmE/CycJ family.

It localises to the cell inner membrane. Its function is as follows. Heme chaperone required for the biogenesis of c-type cytochromes. Transiently binds heme delivered by CcmC and transfers the heme to apo-cytochromes in a process facilitated by CcmF and CcmH. This is Cytochrome c-type biogenesis protein CcmE from Stutzerimonas stutzeri (strain A1501) (Pseudomonas stutzeri).